Reading from the N-terminus, the 228-residue chain is 2,3-bisphosphoglycerate-dependent phosphoglycerate mutase (228 aa).

Substrate contacts are provided by residues 8–15 (RHGQSEWN), 21–22 (TG), R60, 87–90 (ERHY), K98, 114–115 (RR), and 183–184 (GN). The Tele-phosphohistidine intermediate role is filled by H9. The active-site Proton donor/acceptor is the E87.

This sequence belongs to the phosphoglycerate mutase family. BPG-dependent PGAM subfamily.

The catalysed reaction is (2R)-2-phosphoglycerate = (2R)-3-phosphoglycerate. It functions in the pathway carbohydrate degradation; glycolysis; pyruvate from D-glyceraldehyde 3-phosphate: step 3/5. Catalyzes the interconversion of 2-phosphoglycerate and 3-phosphoglycerate. The sequence is that of 2,3-bisphosphoglycerate-dependent phosphoglycerate mutase from Staphylococcus epidermidis (strain ATCC 35984 / DSM 28319 / BCRC 17069 / CCUG 31568 / BM 3577 / RP62A).